The sequence spans 337 residues: 2-oxoglutarate-dependent dioxygenase 19 (337 aa).

Residues 1–25 (MVAPSRLPSHEEQSAAAAADGSATP) are disordered. A Fe2OG dioxygenase domain is found at 179-283 (NLESCFQILV…RMSFVSLIGP (105 aa)). 3 residues coordinate Fe cation: His-208, Asp-210, and His-264. Arg-274 is a binding site for 2-oxoglutarate.

This sequence belongs to the iron/ascorbate-dependent oxidoreductase family. Fe(2+) serves as cofactor. It depends on L-ascorbate as a cofactor. In terms of tissue distribution, expressed in shoots.

The protein resides in the cytoplasm. The catalysed reaction is melatonin + 2-oxoglutarate + O2 = 2-hydroxymelatonin + succinate + CO2. Its function is as follows. Involved in melatonin degradation. Catalyzes the hydroxylation of melatonin to produce 2-hydroxymelatonin. The polypeptide is 2-oxoglutarate-dependent dioxygenase 19 (Oryza sativa subsp. japonica (Rice)).